The chain runs to 191 residues: Neurotrophic factor BDNF precursor form (191 aa).

The segment at 1–23 (GQGSLAYPGLRTQGNLETLGGPN) is disordered. Residues 1–100 (GQGSLAYPGL…AANMSMRVRR (100 aa)) constitute a propeptide that is removed on maturation. N93 carries N-linked (GlcNAc...) asparagine glycosylation. An intrachain disulfide couples C113 to C180.

It belongs to the NGF-beta family.

It localises to the secreted. Functionally, promotes the survival of neuronal populations that are all located either in the central nervous system or directly connected to it. The protein is Neurotrophic factor BDNF precursor form (BDNF) of Anilius scytale (Coral cylinder snake).